Consider the following 131-residue polypeptide: Small ribosomal subunit protein uS8 (131 aa).

It belongs to the universal ribosomal protein uS8 family. As to quaternary structure, part of the 30S ribosomal subunit. Contacts proteins S5 and S12.

Its function is as follows. One of the primary rRNA binding proteins, it binds directly to 16S rRNA central domain where it helps coordinate assembly of the platform of the 30S subunit. The protein is Small ribosomal subunit protein uS8 of Aromatoleum aromaticum (strain DSM 19018 / LMG 30748 / EbN1) (Azoarcus sp. (strain EbN1)).